A 423-amino-acid chain; its full sequence is Imidazolonepropionase (423 aa).

The Fe(3+) site is built by histidine 78 and histidine 80. Zn(2+) contacts are provided by histidine 78 and histidine 80. Residues arginine 87, tyrosine 150, and histidine 183 each coordinate 4-imidazolone-5-propanoate. Position 150 (tyrosine 150) interacts with N-formimidoyl-L-glutamate. A Fe(3+)-binding site is contributed by histidine 247. Histidine 247 contributes to the Zn(2+) binding site. Glutamate 250 contributes to the 4-imidazolone-5-propanoate binding site. Aspartate 322 is a Fe(3+) binding site. Aspartate 322 lines the Zn(2+) pocket. Residues asparagine 324 and glycine 326 each coordinate N-formimidoyl-L-glutamate. Serine 327 is a 4-imidazolone-5-propanoate binding site.

The protein belongs to the metallo-dependent hydrolases superfamily. HutI family. Zn(2+) serves as cofactor. Requires Fe(3+) as cofactor.

It localises to the cytoplasm. The enzyme catalyses 4-imidazolone-5-propanoate + H2O = N-formimidoyl-L-glutamate. It participates in amino-acid degradation; L-histidine degradation into L-glutamate; N-formimidoyl-L-glutamate from L-histidine: step 3/3. In terms of biological role, catalyzes the hydrolytic cleavage of the carbon-nitrogen bond in imidazolone-5-propanoate to yield N-formimidoyl-L-glutamate. It is the third step in the universal histidine degradation pathway. The protein is Imidazolonepropionase of Bacillus cytotoxicus (strain DSM 22905 / CIP 110041 / 391-98 / NVH 391-98).